Here is a 689-residue protein sequence, read N- to C-terminus: MAAPPSTRLQGMLQTAVQSVQWTYSLFWQLCPQQGILVWGDGYYNGAIKTRKTVLPIEVSAEEASLQRSQQLRELYDSLSAGESNQQTRRPCAALSPEDLTESEWFYLMCVSFSFPPGVGLPGKAYAKRQHVWLTGANEVDSKVFSRAILAKSARVQTVVCIPLLDGVVELGNTERVQEDIGFIHQVKSFFIDHHPPPPPKPALSEHSTSNLATSSVHPRFHSPPLPLTYAPLDPPLIANQIHMEEEQEQEQEEDEDDDDDDDDEEEAESDSEAHTGLNSEAQNPRVDHVARAAAEPSELMQLEMSEDIRLGSPDDGSNNMDPDFQLMVASQGGNPADQQQRVDSFRAESTRRWPLLQDPLGRSLQAPTSGGTGLEELTQDDTHYSQTVSTILQHQSNRWLESSSSSAAGCLMYSSQSSFSKWPLRPSDHHHQADATSQCLLKYILFTVPFLHSKYRDDNNSPKSATAADSASRFRKPTPQDELSANHVLAERRRREKLNERFIILRSLVPFVTKMDKASILGDTIEYVKQLRKNIQDLEARARQIEIDQRSRSSGDPQRSGAKAATDKRKLRIVEASGGAKGKAVDSVAVATPPPPAPPQPVAGVGVQVQVSIIESDALVELQCTHREGLLLDVMVVLRDHRVEVTAVQSSLTNGVFVAELRAKVKENVNGKKPSIVEVKRAIHQIIP.

Disordered stretches follow at residues isoleucine 192–valine 287 and aspartate 458–valine 489. Residues glutamate 206–valine 217 are compositionally biased toward polar residues. Acidic residues predominate over residues glutamate 246 to aspartate 271. Residues glutamate 483 to arginine 496 form a basic motif region. The 50-residue stretch at glutamate 483–leucine 532 folds into the bHLH domain. The tract at residues glutamate 497–leucine 532 is helix-loop-helix motif. Residues glutamate 547–arginine 570 form a disordered region.

This sequence belongs to the bHLH protein family. As to quaternary structure, interacts with MYB123. In terms of tissue distribution, expressed in the inner pericarp of maturing fruits.

Its subcellular location is the nucleus. In terms of biological role, transcription activator involved in the spatiotemporal regulation of anthocyanin biosynthesis specifically in the inner pericarp of red-fleshed kiwifruits. Functions in association with MYB123 to activate the promoters of LDOX (ANS) and F3GT1 that encode the dedicated enzymes for anthocyanin biosynthesis. This Actinidia chinensis var. chinensis (Chinese soft-hair kiwi) protein is Transcription factor BHLH42.